The sequence spans 90 residues: Small ribosomal subunit protein uS15 (90 aa).

Belongs to the universal ribosomal protein uS15 family. As to quaternary structure, part of the 30S ribosomal subunit. Forms a bridge to the 50S subunit in the 70S ribosome, contacting the 23S rRNA.

Functionally, one of the primary rRNA binding proteins, it binds directly to 16S rRNA where it helps nucleate assembly of the platform of the 30S subunit by binding and bridging several RNA helices of the 16S rRNA. Its function is as follows. Forms an intersubunit bridge (bridge B4) with the 23S rRNA of the 50S subunit in the ribosome. This Campylobacter curvus (strain 525.92) protein is Small ribosomal subunit protein uS15.